The following is a 1038-amino-acid chain: Importin-7 (1038 aa).

Methionine 1 is subject to N-acetylmethionine. An Importin N-terminal domain is found at 22–101; the sequence is AERQLNEAHK…RENIVEAIIH (80 aa). The segment at 881-910 is disordered; the sequence is EHENDSDDDDEAEDDDETEELGSDEDDIDE. Residues 884 to 910 show a composition bias toward acidic residues; sequence NDSDDDDEAEDDDETEELGSDEDDIDE. Phosphoserine is present on serine 886. Threonine 898 carries the post-translational modification Phosphothreonine. Residues serine 903 and serine 1020 each carry the phosphoserine modification.

Belongs to the importin beta family. As to quaternary structure, forms a heterodimer with KPNB1. Interacts with histone H1. Interacts with H2A, H2B, H3 and H4 histones. Interacts with SNUPN and XPO1. Interacts with RPS7 and RPL5. Interacts with RPL23A (via BIB domain). Binds directly to nuclear pore complexes. Interacts with SMAD4 and NUP93; translocates SMAD4 to the nucleus through the NPC upon BMP7 stimulation resulting in activation of SMAD4 signaling. Interacts with phosphorylated SMAD2; the interaction facilitates translocation of SMAD2 to the nucleus. Interacts with SRP19. Interacts with RUNX2; the interaction inhibits RUNX2 nuclear translocation in osteoblasts. Interacts with HDAC6, DLX3 and KLF4; the interaction facilitates HDAC6, DLX3 and KLF4 nuclear translocation in dental papilla cells. (Microbial infection) Interacts with HIV-1 reverse transcription complex integrase and rev.

It is found in the cytoplasm. The protein resides in the nucleus. In terms of biological role, functions in nuclear protein import, either by acting as autonomous nuclear transport receptor or as an adapter-like protein in association with the importin-beta subunit KPNB1. Acting autonomously, is thought to serve itself as receptor for nuclear localization signals (NLS) and to promote translocation of import substrates through the nuclear pore complex (NPC) by an energy requiring, Ran-dependent mechanism. At the nucleoplasmic side of the NPC, Ran binds to importin, the importin/substrate complex dissociates and importin is re-exported from the nucleus to the cytoplasm where GTP hydrolysis releases Ran. The directionality of nuclear import is thought to be conferred by an asymmetric distribution of the GTP- and GDP-bound forms of Ran between the cytoplasm and nucleus. Mediates autonomously the nuclear import of ribosomal proteins RPL23A, RPS7 and RPL5. In association with KPNB1 mediates the nuclear import of H1 histone and the Ran-binding site of IPO7 is not required but synergizes with that of KPNB1 in importin/substrate complex dissociation. Promotes odontoblast differentiation via promoting nuclear translocation of DLX3, KLF4, SMAD2, thereby facilitating the transcription of target genes that play a role in odontoblast differentiation. Facilitates BMP4-induced translocation of SMAD1 to the nucleus and recruitment to the MSX1 gene promoter, thereby promotes the expression of the odontogenic regulator MSX1 in dental mesenchymal cells. Also promotes odontoblast differentiation by facilitating the nuclear translocation of HDAC6 and subsequent repression of RUNX2 expression. Inhibits osteoblast differentiation by inhibiting nuclear translocation of RUNX2 and therefore inhibition of RUNX2 target gene transcription. In vitro, mediates nuclear import of H2A, H2B, H3 and H4 histones. Its function is as follows. (Microbial infection) Mediates the nuclear import of HIV-1 reverse transcription complex (RTC) integrase. Binds and mediates the nuclear import of HIV-1 Rev. The sequence is that of Importin-7 (IPO7) from Homo sapiens (Human).